A 466-amino-acid polypeptide reads, in one-letter code: Muscarinic acetylcholine receptor M2 (466 aa).

At 1 to 22 the chain is on the extracellular side; sequence MNNSTNSSNNGLAITSPYKTFE. 3 N-linked (GlcNAc...) asparagine glycosylation sites follow: asparagine 2, asparagine 3, and asparagine 6. Residues 23 to 45 form a helical membrane-spanning segment; the sequence is VVFIVLVAGSLSLVTIIGNILVM. Topologically, residues 46-59 are cytoplasmic; sequence VSIKVNRHLQTVNN. A helical transmembrane segment spans residues 60-80; the sequence is YFLFSLACADLIIGVFSMNLY. Residues 81–97 are Extracellular-facing; sequence TLYTVIGYWPLGPVVCD. A disulfide bond links cysteine 96 and cysteine 176. Residues 98–119 traverse the membrane as a helical segment; it reads LWLALDYVVSNASVMNLLIISF. An Important for signaling motif is present at residues 120-122; that stretch reads DRY. Topologically, residues 120–139 are cytoplasmic; that stretch reads DRYFCVTKPLTYPVKRTTKM. Residues 140 to 162 traverse the membrane as a helical segment; sequence AGMMIAAAWVLSFILWAPAILFW. Topologically, residues 163 to 184 are extracellular; the sequence is QFIVGVRTVEDGECYIQFFSNA. Residues 185–209 form a helical membrane-spanning segment; that stretch reads AVTFGTAIAAFYLPVIIMTVLYWHI. At 210-387 the chain is on the cytoplasmic side; the sequence is SRASKSRIKK…PPSREKKVTR (178 aa). Positions 218 to 320 are disordered; it reads KKEKKEPVAN…SLGHSKDDNS (103 aa). At serine 232 the chain carries Phosphoserine. Residues 254-270 show a composition bias toward basic and acidic residues; it reads GLEHNKIQNGKAPRDGG. Composition is skewed to polar residues over residues 284–293 and 304–313; these read NDSTSVSAVA and DENTVSTSLG. A helical membrane pass occupies residues 388-410; that stretch reads TILAILLAFIITWAPYNVMVLIN. Residues 411–418 are Extracellular-facing; the sequence is TFCAPCIP. A disulfide bridge links cysteine 413 with cysteine 416. Residues 419-442 form a helical membrane-spanning segment; it reads NTVWTIGYWLCYINSTINPACYAL. The Important for signaling motif lies at 436–440; it reads NPACY. Over 443–466 the chain is Cytoplasmic; sequence CNATFKKTFKHLLMCHYKNIGATR. Threonine 446, threonine 450, and threonine 465 each carry phosphothreonine.

The protein belongs to the G-protein coupled receptor 1 family. Muscarinic acetylcholine receptor subfamily. CHRM2 sub-subfamily. Interacts with ARRB1 and ARRB2. Interacts with RACK1; the interaction regulates CHRM2 internalization. Post-translationally, phosphorylated in response to agonist treatment.

The protein localises to the cell membrane. It localises to the postsynaptic cell membrane. In terms of biological role, the muscarinic acetylcholine receptor mediates various cellular responses, including inhibition of adenylate cyclase, breakdown of phosphoinositides and modulation of potassium channels through the action of G proteins. Primary transducing effect is adenylate cyclase inhibition. Signaling promotes phospholipase C activity, leading to the release of inositol trisphosphate (IP3); this then triggers calcium ion release into the cytosol. The protein is Muscarinic acetylcholine receptor M2 (Chrm2) of Mus musculus (Mouse).